The primary structure comprises 208 residues: Ribosomal RNA large subunit methyltransferase E (208 aa).

S-adenosyl-L-methionine contacts are provided by Gly-62, Trp-64, Asp-82, Asp-98, and Asp-123. Catalysis depends on Lys-163, which acts as the Proton acceptor.

Belongs to the class I-like SAM-binding methyltransferase superfamily. RNA methyltransferase RlmE family.

The protein resides in the cytoplasm. The enzyme catalyses uridine(2552) in 23S rRNA + S-adenosyl-L-methionine = 2'-O-methyluridine(2552) in 23S rRNA + S-adenosyl-L-homocysteine + H(+). In terms of biological role, specifically methylates the uridine in position 2552 of 23S rRNA at the 2'-O position of the ribose in the fully assembled 50S ribosomal subunit. The protein is Ribosomal RNA large subunit methyltransferase E of Idiomarina loihiensis (strain ATCC BAA-735 / DSM 15497 / L2-TR).